An 879-amino-acid chain; its full sequence is Valine--tRNA ligase (879 aa).

Positions 45 to 55 match the 'HIGH' region motif; it reads PNVTGKLHLGH. Positions 521-525 match the 'KMSKS' region motif; that stretch reads KMSKS. Residue lysine 524 participates in ATP binding. The stretch at 806-879 forms a coiled coil; the sequence is LTELVNVDEE…ERIQDLKESK (74 aa).

Belongs to the class-I aminoacyl-tRNA synthetase family. ValS type 1 subfamily. Monomer.

The protein resides in the cytoplasm. It catalyses the reaction tRNA(Val) + L-valine + ATP = L-valyl-tRNA(Val) + AMP + diphosphate. Functionally, catalyzes the attachment of valine to tRNA(Val). As ValRS can inadvertently accommodate and process structurally similar amino acids such as threonine, to avoid such errors, it has a 'posttransfer' editing activity that hydrolyzes mischarged Thr-tRNA(Val) in a tRNA-dependent manner. This is Valine--tRNA ligase from Lactobacillus acidophilus (strain ATCC 700396 / NCK56 / N2 / NCFM).